A 495-amino-acid chain; its full sequence is Cytochrome P450 monooxygenase 88 (495 aa).

A helical membrane pass occupies residues 2 to 22; that stretch reads FLQIVTSVLATGLLYALISVL. Residues Asn-25 and Asn-198 are each glycosylated (N-linked (GlcNAc...) asparagine). Cys-428 provides a ligand contact to heme.

It belongs to the cytochrome P450 family. Heme is required as a cofactor.

Its subcellular location is the membrane. It participates in secondary metabolite biosynthesis. Cytochrome P450 monooxygenase that is able to use 4-ethoxybenzoic acid as a substrate for oxidation. The chain is Cytochrome P450 monooxygenase 88 from Postia placenta (strain ATCC 44394 / Madison 698-R) (Brown rot fungus).